The following is an 81-amino-acid chain: Small ribosomal subunit protein bS18 (81 aa).

The protein belongs to the bacterial ribosomal protein bS18 family. Part of the 30S ribosomal subunit. Forms a tight heterodimer with protein bS6.

In terms of biological role, binds as a heterodimer with protein bS6 to the central domain of the 16S rRNA, where it helps stabilize the platform of the 30S subunit. In Chlamydia trachomatis serovar L2 (strain ATCC VR-902B / DSM 19102 / 434/Bu), this protein is Small ribosomal subunit protein bS18.